The following is a 219-amino-acid chain: Phosphoribosylformylglycinamidine synthase subunit PurQ (219 aa).

One can recognise a Glutamine amidotransferase type-1 domain in the interval 2 to 219; it reads KIAVITFPGS…KVVLDLILGS (218 aa). Cys86 acts as the Nucleophile in catalysis. Residues His195 and Glu197 contribute to the active site.

Part of the FGAM synthase complex composed of 1 PurL, 1 PurQ and 2 PurS subunits.

It is found in the cytoplasm. It carries out the reaction N(2)-formyl-N(1)-(5-phospho-beta-D-ribosyl)glycinamide + L-glutamine + ATP + H2O = 2-formamido-N(1)-(5-O-phospho-beta-D-ribosyl)acetamidine + L-glutamate + ADP + phosphate + H(+). The catalysed reaction is L-glutamine + H2O = L-glutamate + NH4(+). It participates in purine metabolism; IMP biosynthesis via de novo pathway; 5-amino-1-(5-phospho-D-ribosyl)imidazole from N(2)-formyl-N(1)-(5-phospho-D-ribosyl)glycinamide: step 1/2. Its function is as follows. Part of the phosphoribosylformylglycinamidine synthase complex involved in the purines biosynthetic pathway. Catalyzes the ATP-dependent conversion of formylglycinamide ribonucleotide (FGAR) and glutamine to yield formylglycinamidine ribonucleotide (FGAM) and glutamate. The FGAM synthase complex is composed of three subunits. PurQ produces an ammonia molecule by converting glutamine to glutamate. PurL transfers the ammonia molecule to FGAR to form FGAM in an ATP-dependent manner. PurS interacts with PurQ and PurL and is thought to assist in the transfer of the ammonia molecule from PurQ to PurL. This Leptospira interrogans serogroup Icterohaemorrhagiae serovar copenhageni (strain Fiocruz L1-130) protein is Phosphoribosylformylglycinamidine synthase subunit PurQ.